A 394-amino-acid chain; its full sequence is Probable nucleoredoxin 2 (394 aa).

2 consecutive Thioredoxin domains span residues 15-176 and 180-327; these read GVGG…QTLE and SVSG…EMED.

Belongs to the nucleoredoxin family.

It catalyses the reaction [protein]-dithiol + NAD(+) = [protein]-disulfide + NADH + H(+). It carries out the reaction [protein]-dithiol + NADP(+) = [protein]-disulfide + NADPH + H(+). Probable thiol-disulfide oxidoreductase that may participate in various redox reactions. This chain is Probable nucleoredoxin 2, found in Oryza sativa subsp. japonica (Rice).